Reading from the N-terminus, the 110-residue chain is MKFVLLFGVLLVTLFSYSSAEMLDDFDQADEDELLSLIEKEEARKDCIPKHHECTSNKHGCCRGHSFKYKCQCTTVVTQSGEETERCFCGTPPHHEAAELVVGFGKKIFG.

The N-terminal stretch at 1–20 (MKFVLLFGVLLVTLFSYSSA) is a signal peptide. Positions 21 to 44 (EMLDDFDQADEDELLSLIEKEEAR) are excised as a propeptide. Intrachain disulfides connect C47–C62, C54–C71, C61–C89, and C73–C87.

The protein belongs to the neurotoxin 19 (CSTX) family. 03 subfamily. In terms of tissue distribution, expressed by the venom gland.

It localises to the secreted. This chain is U1-lycotoxin-Ls1mm, found in Lycosa singoriensis (Wolf spider).